The sequence spans 377 residues: Queuine tRNA-ribosyltransferase (377 aa).

Asp-94 acts as the Proton acceptor in catalysis. Residues 94–98 (DSGGF), Asp-148, Gln-191, and Gly-218 each bind substrate. The segment at 249–255 (GVGTPDD) is RNA binding. Asp-268 acts as the Nucleophile in catalysis. The tract at residues 273-277 (TRAGR) is RNA binding; important for wobble base 34 recognition.

It belongs to the queuine tRNA-ribosyltransferase family. In terms of assembly, homodimer. Within each dimer, one monomer is responsible for RNA recognition and catalysis, while the other monomer binds to the replacement base PreQ1.

It catalyses the reaction 7-aminomethyl-7-carbaguanine + guanosine(34) in tRNA = 7-aminomethyl-7-carbaguanosine(34) in tRNA + guanine. The protein operates within tRNA modification; tRNA-queuosine biosynthesis. Functionally, catalyzes the base-exchange of a guanine (G) residue with the queuine precursor 7-aminomethyl-7-deazaguanine (PreQ1) at position 34 (anticodon wobble position) in tRNAs with GU(N) anticodons (tRNA-Asp, -Asn, -His and -Tyr). Catalysis occurs through a double-displacement mechanism. The nucleophile active site attacks the C1' of nucleotide 34 to detach the guanine base from the RNA, forming a covalent enzyme-RNA intermediate. The proton acceptor active site deprotonates the incoming PreQ1, allowing a nucleophilic attack on the C1' of the ribose to form the product. After dissociation, two additional enzymatic reactions on the tRNA convert PreQ1 to queuine (Q), resulting in the hypermodified nucleoside queuosine (7-(((4,5-cis-dihydroxy-2-cyclopenten-1-yl)amino)methyl)-7-deazaguanosine). The sequence is that of Queuine tRNA-ribosyltransferase from Brucella suis biovar 1 (strain 1330).